The primary structure comprises 325 residues: uncharacterized protein (325 aa).

A helical transmembrane segment spans residues 10 to 30; the sequence is IVFVSLAALVLLVSVSVFIYH. The 73-residue stretch at 94 to 166 folds into the AB hydrolase-1 domain; it reads KIAVVDRAGY…EIKAIIAMDI (73 aa).

The protein resides in the cell membrane. This is an uncharacterized protein from Bacillus subtilis (strain 168).